The following is a 132-amino-acid chain: Small ribosomal subunit protein uS8 (132 aa).

It belongs to the universal ribosomal protein uS8 family. As to quaternary structure, part of the 30S ribosomal subunit. Contacts proteins S5 and S12.

In terms of biological role, one of the primary rRNA binding proteins, it binds directly to 16S rRNA central domain where it helps coordinate assembly of the platform of the 30S subunit. The chain is Small ribosomal subunit protein uS8 from Stenotrophomonas maltophilia (strain R551-3).